Consider the following 279-residue polypeptide: tRNA (carboxymethyluridine(34)-5-O)-methyltransferase (279 aa).

The segment at 172–236 is disordered; the sequence is KSKSKPKTKS…QQQDQEQERE (65 aa). Residues 200–229 show a composition bias toward basic and acidic residues; it reads PKERSEYLQRWKEEQQRSKSLDDNDEKQQQ.

In terms of assembly, interacts with TRM112.

Its subcellular location is the cytoplasm. The protein resides in the nucleus. It carries out the reaction 5-(carboxymethyl)uridine(34) in tRNA + S-adenosyl-L-methionine = 5-(2-methoxy-2-oxoethyl)uridine(34) in tRNA + S-adenosyl-L-homocysteine. Its function is as follows. Required for the methylation of the wobble bases at position 34 in tRNA. Appears to have a role in stress-response. The polypeptide is tRNA (carboxymethyluridine(34)-5-O)-methyltransferase (TRM9) (Saccharomyces cerevisiae (strain ATCC 204508 / S288c) (Baker's yeast)).